A 923-amino-acid polypeptide reads, in one-letter code: Smoothelin (923 aa).

Ala2 is modified (N-acetylalanine). Positions 24-89 (LAERRRIRSA…ARLAGRLESM (66 aa)) form a coiled coil. The interval 134–456 (SRLPSSGPRE…GTGEPGGSMK (323 aa)) is disordered. Composition is skewed to low complexity over residues 164 to 179 (QEQQTEVLEPTPTPED) and 192 to 205 (RAPPGGRPSSPASP). The segment covering 237–252 (LPHPSEAPSPEPPMSP) has biased composition (pro residues). Polar residues-rich tracts occupy residues 272–285 (PSDTLDSIRGFSNT) and 293–314 (TKSCQRSLSVLSPRQPTPNREP). 4 positions are modified to phosphoserine: Ser299, Ser301, Ser304, and Ser340. Residues Thr359 and Thr372 each carry the phosphothreonine modification. Low complexity predominate over residues 366–389 (PSLISTTPASSSSSNSSSPSPSDT). Phosphoserine occurs at positions 501, 521, and 574. Disordered regions lie at residues 542 to 578 (KMEPDPAEPPSTTVEAANGAEQARVDKGPEGRSPLSA) and 615 to 772 (QRKR…ARKA). A coiled-coil region spans residues 601–628 (EERKLIRAALRELRQRKRDQRDKERERR). Positions 615–638 (QRKRDQRDKERERRLREARARPGE) are enriched in basic and acidic residues. At Ser641 the chain carries Phosphoserine. The span at 674–687 (NDGTQTARTTTVES) shows a compositional bias: polar residues. Over residues 697-721 (SSSSSTTTTTVQTKSFSSSSSSSSS) the composition is skewed to low complexity. Ser735 carries the phosphoserine modification. Residues 744–756 (LERRQAEKKKELM) show a composition bias toward basic and acidic residues. Ser798 is modified (phosphoserine). Residues 805-912 (NSIKQMLLDW…YVQSLYNHLR (108 aa)) form the Calponin-homology (CH) domain.

Belongs to the smoothelin family.

It localises to the cytoplasm. The protein resides in the cytoskeleton. Functionally, structural protein of the cytoskeleton. This chain is Smoothelin (Smtn), found in Mus musculus (Mouse).